A 343-amino-acid chain; its full sequence is Polyprenyl transferase spyF (343 aa).

8 helical membrane passes run 38 to 58 (WLAV…SHPL), 62 to 82 (VSVW…PASI), 92 to 112 (LLCL…NDWI), 138 to 158 (GFIW…STIL), 170 to 190 (LYIY…AIGW), 241 to 261 (AYVA…GLVL), 273 to 293 (SGWL…HQLL), and 311 to 331 (FALG…SSGM).

It belongs to the UbiA prenyltransferase family. Mg(2+) serves as cofactor.

The protein resides in the membrane. It carries out the reaction triacetate lactone + (2E,6E,10E)-geranylgeranyl diphosphate = (2E,6E,10E)-geranylgeranyl-triacetate lactone + diphosphate. It participates in secondary metabolite biosynthesis; terpenoid biosynthesis. Its function is as follows. Polyprenyl transferase; part of the gene cluster that mediates the biosynthesis of meroterpenoids called sartorypyrones. Within the pathway, spyF catalyzes the prenylation of triacetic acid lactone (TAL) to produce geranylgeranyl-triacetate lactone. The biosynthesis of sartorypyrones begins with the production of triacetic acid lactone (TAL) by the NR-PKS spyA using one molecule of acetyl-CoA and two molecules of malonyl-CoA. The prenyltransferase spyF then conjugates geranylgeranyl pyrophosphate (GGPP) to TAL to form geranylgeranyl-triacetate lactone, for which the pathway-specific geranylgeranyl pyrophosphate synthase (GGPS) spyE is required to provide GGPP. Subsequently, geranylgeranyl-triacetate lactone is epoxidized at the terminal olein by the FAD-dependent monooxygenase spyC, followed by cyclization of the terpenoid component catalyzed by the terpene cyclase spyD to produce both the bicyclic sartorypyrone F and the monocyclic sartorypyrone D. Finally, the last step of the biosynthesis involves the acetylation of the meroterpenoids sartorypyrones D and F by the acetyltransferase SpyB to produce sartorypyrones A and G, respectively. In Aspergillus fumigatus (strain ATCC MYA-4609 / CBS 101355 / FGSC A1100 / Af293) (Neosartorya fumigata), this protein is Polyprenyl transferase spyF.